Here is a 395-residue protein sequence, read N- to C-terminus: MTLSPTTADKFTFGLWTVGWTGADPFGVATRAALDPVEAVHKLSELGAYGITFHDNDLVPFDAPASERELILKNFRAALADTGLKVPMVTTNLFSHPVFKDGGFTSNDRSVRRFALSKVLRNIDLAAELGAETFVMWGGREGSEYDGSKDLAAALDRMKEGVDTAAGYIKDKGYNLRIALEPKPNEPRGDIFLPTVGHGLAFIAQLEHGDIVGLNPETGHEQMAGLNFTHGIAQALWAGKLFHIDLNGQRGIKYDQDLVFGHGDLTSAFFTVDLLENGFPGGGPKYDGPRHFDYKPSRTDGYDGVWESAKANMAMYLLLKERALAFRADPEVQEALAASGVFELGEPTLNAGETTADLLADAASFEDFDADKAAERSFAFVRLNQLAIEHLLNAR.

Catalysis depends on residues histidine 54 and aspartate 57. Mg(2+) is bound by residues glutamate 181, glutamate 217, histidine 220, aspartate 245, aspartate 255, aspartate 257, and aspartate 293.

This sequence belongs to the xylose isomerase family. Homotetramer. Mg(2+) is required as a cofactor.

It is found in the cytoplasm. It catalyses the reaction alpha-D-xylose = alpha-D-xylulofuranose. The chain is Xylose isomerase from Pseudarthrobacter chlorophenolicus (strain ATCC 700700 / DSM 12829 / CIP 107037 / JCM 12360 / KCTC 9906 / NCIMB 13794 / A6) (Arthrobacter chlorophenolicus).